The following is a 347-amino-acid chain: D-alanine--D-alanine ligase (347 aa).

An ATP-grasp domain is found at 134-332; it reads KLYAKDLGIK…LAQSLPKTPK (199 aa). Residue 161-216 coordinates ATP; that stretch reads LINFNFPFIIKPNSAGSSLGVSVVKEEKELNYALDSAFEYSKEVLIEPFIQGVKEY. Mg(2+)-binding residues include aspartate 288, glutamate 300, and asparagine 302.

The protein belongs to the D-alanine--D-alanine ligase family. Mg(2+) serves as cofactor. The cofactor is Mn(2+).

Its subcellular location is the cytoplasm. It catalyses the reaction 2 D-alanine + ATP = D-alanyl-D-alanine + ADP + phosphate + H(+). The protein operates within cell wall biogenesis; peptidoglycan biosynthesis. Functionally, cell wall formation. The sequence is that of D-alanine--D-alanine ligase from Helicobacter pylori (strain HPAG1).